A 396-amino-acid polypeptide reads, in one-letter code: MAKAKFERTKPHVNIGTIGHVDHGKTTLTAAISKVLHDKYPDLNPFTPFDEIDKAPEEKQRGITINIAHVEYQTEKRHYAHVDAPGHADYIKNMITGAAQMDGAILVVAATDGPMAQTREHVLLARQVGVPYLLVALNKSDMVDDEEILELVEMEVRELLSSQGFDGDDAPVIRVSGLKALEGDPEWVKTVEELMDAVDESVPEPVRDMDKPFLMPIEDVFTITGRGTVVTGKVERGKLAINSEVEIVGIRPAQKTTVTGIEMFHKQMDEAWAGENCGLLLRGTKREDVERGQVVVKPGTNTPHTQFEAQVYILSKAEGGRDNPFYSNYRPQFYFRTTDVTGVITLPEGTQMVMPGDNTEMTVDLIQPIAMEEGLGFAIREGGRTIGSGKVTKILA.

Residues 10–206 (KPHVNIGTIG…AVDESVPEPV (197 aa)) enclose the tr-type G domain. The interval 19-26 (GHVDHGKT) is G1. GTP is bound at residue 19-26 (GHVDHGKT). A Mg(2+)-binding site is contributed by Thr26. Residues 62–66 (GITIN) are G2. The segment at 83–86 (DAPG) is G3. GTP contacts are provided by residues 83-87 (DAPGH) and 138-141 (NKSD). A G4 region spans residues 138–141 (NKSD). Residues 176 to 178 (SGL) form a G5 region.

The protein belongs to the TRAFAC class translation factor GTPase superfamily. Classic translation factor GTPase family. EF-Tu/EF-1A subfamily. As to quaternary structure, monomer.

Its subcellular location is the cytoplasm. The catalysed reaction is GTP + H2O = GDP + phosphate + H(+). Functionally, GTP hydrolase that promotes the GTP-dependent binding of aminoacyl-tRNA to the A-site of ribosomes during protein biosynthesis. The polypeptide is Elongation factor Tu (Beutenbergia cavernae (strain ATCC BAA-8 / DSM 12333 / CCUG 43141 / JCM 11478 / NBRC 16432 / NCIMB 13614 / HKI 0122)).